Here is a 485-residue protein sequence, read N- to C-terminus: Signal recognition particle protein (485 aa).

GTP-binding positions include 107–114 (GLQGAGKT), 189–193 (DTAGR), and 247–250 (TKLD). The segment at 452–485 (GFGGGAPAPQPGFRGYGPPKKQKKGSKKKKGFGL) is disordered. Basic residues predominate over residues 471–485 (KKQKKGSKKKKGFGL).

Belongs to the GTP-binding SRP family. SRP54 subfamily. As to quaternary structure, part of the signal recognition particle protein translocation system, which is composed of SRP and FtsY.

The protein localises to the cytoplasm. It carries out the reaction GTP + H2O = GDP + phosphate + H(+). Involved in targeting and insertion of nascent membrane proteins into the cytoplasmic membrane. Binds to the hydrophobic signal sequence of the ribosome-nascent chain (RNC) as it emerges from the ribosomes. The SRP-RNC complex is then targeted to the cytoplasmic membrane where it interacts with the SRP receptor FtsY. The protein is Signal recognition particle protein of Synechococcus elongatus (strain ATCC 33912 / PCC 7942 / FACHB-805) (Anacystis nidulans R2).